The chain runs to 496 residues: RNA-binding motif protein, Y chromosome, family 1 member B (496 aa).

The region spanning 8–85 (GKLFIGGLNR…KAIKVEQAKK (78 aa)) is the RRM domain. 2 disordered regions span residues 67–349 (DMNG…HRDY) and 452–496 (KDQR…SSRY). 2 stretches are compositionally biased toward low complexity: residues 97–114 (PASSRNRSPSGSLRSARG) and 149–159 (PVKRGPSSRSG). Polar residues predominate over residues 175-184 (NSWMGSQGPM). Basic and acidic residues-rich tracts occupy residues 204–214 (RNDRMSTRHDG), 242–253 (DNGHSNRDEHSS), 276–289 (AYRDYGHSRRDESY), 313–326 (GYRDYGHSRRHESY), 335–349 (SSRETRDYAPPHRDY), and 484–496 (GESRSEKGDSSRY).

As to quaternary structure, interacts with splicing factor proteins SFRS3/SRP20, TRA2B/SFRS10, KHDRBS1/SAM68 and KHDRBS3. Testis-specific.

The protein resides in the nucleus. Functionally, RNA-binding protein which may be involved in spermatogenesis. Required for sperm development, possibly by participating in pre-mRNA splicing in the testis. The protein is RNA-binding motif protein, Y chromosome, family 1 member B (RBMY1B) of Homo sapiens (Human).